We begin with the raw amino-acid sequence, 492 residues long: ATP synthase subunit beta, chloroplastic (492 aa).

ATP is bound at residue 170–177 (GGAGVGKT).

This sequence belongs to the ATPase alpha/beta chains family. As to quaternary structure, F-type ATPases have 2 components, CF(1) - the catalytic core - and CF(0) - the membrane proton channel. CF(1) has five subunits: alpha(3), beta(3), gamma(1), delta(1), epsilon(1). CF(0) has four main subunits: a(1), b(1), b'(1) and c(9-12).

Its subcellular location is the plastid. The protein localises to the chloroplast thylakoid membrane. It carries out the reaction ATP + H2O + 4 H(+)(in) = ADP + phosphate + 5 H(+)(out). Produces ATP from ADP in the presence of a proton gradient across the membrane. The catalytic sites are hosted primarily by the beta subunits. This chain is ATP synthase subunit beta, chloroplastic, found in Angiopteris evecta (Mule's foot fern).